A 740-amino-acid chain; its full sequence is Arf-GAP with coiled-coil, ANK repeat and PH domain-containing protein 1 (740 aa).

Residues 1–226 form the BAR domain; the sequence is MTVKLDFEEC…RKELGTQLHN (226 aa). Positions 1 to 382 are required for formation of endosomal tubules when overexpressed with PIP5K1C; sequence MTVKLDFEEC…RGPGQVSGYH (382 aa). The region spanning 265-360 is the PH domain; sequence GLVMEGHLFK…WVSAVQSSIA (96 aa). The region spanning 405-527 is the Arf-GAP domain; that stretch reads GQVAAQVQSV…KFLTKLPEIR (123 aa). The tract at residues 405–740 is required for interaction with GULP1; the sequence is GQVAAQVQSV…SRRSHDLHTL (336 aa). The C4-type zinc finger occupies 420–443; sequence CCDCREPAPEWASINLGVTLCIQC. Tyrosine 485 carries the 3'-nitrotyrosine modification. The segment at 525-562 is disordered; sequence EIRGRRGGRGPPRGHPPVPPKPPIRPHSGIVRSKSECP. Residues 525 to 566 are prevents interaction with ITGB1 when S-554 is not phosphorylated; it reads EIRGRRGGRGPPRGHPPVPPKPPIRPHSGIVRSKSECPSDDM. The span at 537–549 shows a compositional bias: pro residues; sequence RGHPPVPPKPPIR. ANK repeat units lie at residues 606–635, 639–668, and 672–702; these read GNATPLIRATAANSLLACEFLLQNGANVNQ, AGRGPLHHATILGHTGLACLFLKRGADLGA, and EGRDPLTIAMETTNADIVTLLRLAKMREAEA.

As to quaternary structure, banana-shaped homodimer laterally assembling into tetramers, the tetramers further pack helically onto the membrane. Interacts with GTP-bound ARF6. Interacts with third cytoplasmic loop of SLC2A4/GLUT4. Interacts with CLTC. Interacts with GULP1. Forms a complex with GDP-bound ARF6 and GULP1. Interacts with ITGB1; required for ITGB1 recycling.

The protein localises to the recycling endosome membrane. GAP activity stimulated by phosphatidylinositol 4,5-bisphosphate (PIP2) and phosphatidic acid. In terms of biological role, GTPase-activating protein (GAP) for ADP ribosylation factor 6 (ARF6) required for clathrin-dependent export of proteins from recycling endosomes to trans-Golgi network and cell surface. Required for regulated export of ITGB1 from recycling endosomes to the cell surface and ITGB1-dependent cell migration. This chain is Arf-GAP with coiled-coil, ANK repeat and PH domain-containing protein 1 (Acap1), found in Mus musculus (Mouse).